A 353-amino-acid polypeptide reads, in one-letter code: Protein-glutamate methylesterase/protein-glutamine glutaminase 3 (353 aa).

One can recognise a Response regulatory domain in the interval 3–120; the sequence is KVLIADDSAL…SSSSDMKKVA (118 aa). Asp54 is subject to 4-aspartylphosphate. The 196-residue stretch at 158–353 folds into the CheB-type methylesterase domain; sequence PRPGREVTKA…AREIIRAVNR (196 aa). Catalysis depends on residues Ser173, His200, and Asp296.

Belongs to the CheB family. In terms of processing, phosphorylated by CheA. Phosphorylation of the N-terminal regulatory domain activates the methylesterase activity.

Its subcellular location is the cytoplasm. The enzyme catalyses [protein]-L-glutamate 5-O-methyl ester + H2O = L-glutamyl-[protein] + methanol + H(+). It catalyses the reaction L-glutaminyl-[protein] + H2O = L-glutamyl-[protein] + NH4(+). Functionally, involved in chemotaxis. Part of a chemotaxis signal transduction system that modulates chemotaxis in response to various stimuli. Catalyzes the demethylation of specific methylglutamate residues introduced into the chemoreceptors (methyl-accepting chemotaxis proteins or MCP) by CheR. Also mediates the irreversible deamidation of specific glutamine residues to glutamic acid. This is Protein-glutamate methylesterase/protein-glutamine glutaminase 3 from Syntrophomonas wolfei subsp. wolfei (strain DSM 2245B / Goettingen).